The primary structure comprises 1343 residues: ABC multidrug transporter atrD (1343 aa).

Over residues 1–10 the composition is skewed to polar residues; that stretch reads MSPLETNPLS. Residues 1-67 are disordered; sequence MSPLETNPLS…HRPKSSSSNN (67 aa). Over residues 20–31 the composition is skewed to low complexity; that stretch reads ETSTTEEQASTP. N99 is a glycosylation site (N-linked (GlcNAc...) asparagine). 4 helical membrane passes run 114-134, 163-183, 235-255, and 263-283; these read ILIMVISTICAIAAGAALPLF, YFVYLGIGEFVTVYVSTVGFI, KVGLTLTALATFVTAFIIAYV, and ICSSTIVALVLTMGGGSQFII. The ABC transmembrane type-1 1 domain occupies 115 to 403; it reads LIMVISTICA…VSPNAQAFTN (289 aa). N-linked (GlcNAc...) asparagine glycosylation is present at N309. The next 2 membrane-spanning stretches (helical) occupy residues 339–359 and 366–386; these read IVMGFMIGAMFGLMYSNYGLG and FLVDGAVDVGDILTVLMAILI. The ABC transporter 1 domain maps to 438–683; sequence IELRNVKHIY…GGAYRKLVEA (246 aa). Residue 473–480 coordinates ATP; the sequence is GPSGSGKS. An N-linked (GlcNAc...) asparagine glycan is attached at N545. 2 helical membrane-spanning segments follow: residues 773–793 and 820–840; these read MLIGLVFSVLAGGGQPTQAVL and LMFFVVGIIQFITQSTNGAAF. An ABC transmembrane type-1 2 domain is found at 774–1063; it reads LIGLVFSVLA…VFSFAPDMGK (290 aa). N872 is a glycosylation site (N-linked (GlcNAc...) asparagine). Transmembrane regions (helical) follow at residues 887-907, 920-942, 1010-1030, and 1037-1057; these read HLSGVSGVTLGTILMTSTTLG, LALVCISVVPVLLACGFYRFYML, ALVFFCVALGFWYGGTLLGHH, and FFVCFSEILFGAQSAGTVFSF. The N-linked (GlcNAc...) asparagine glycan is linked to N1083. Residues 1098–1336 enclose the ABC transporter 2 domain; that stretch reads IEFRNVHFRY…KGRYYELVNL (239 aa). ATP is bound at residue 1133 to 1140; that stretch reads GPSGCGKS.

The protein belongs to the ABC transporter superfamily. ABCB family. Multidrug resistance exporter (TC 3.A.1.201) subfamily.

Its subcellular location is the cell membrane. Fenamirol efflux transporter activity is inhibited by the cyclosporin derivative PSC 833, nigericin, reserpine and valinomycin. The effect of reserpine is transiant, while that of the cyclosporin derivative PSC 833, nigericin and valinomycin is proportional to the time of exposure. Cyclohexinmide has inhibitory effect only when applied prior to addition of the fungicide. Functionally, pleiotropic ABC efflux transporter involved in the protection of the cells against a wide range of toxic compounds. Confers resistance to the azole fenarimol via efflux transport. May also be involved in the secretion of penicillin. The polypeptide is ABC multidrug transporter atrD (Emericella nidulans (strain FGSC A4 / ATCC 38163 / CBS 112.46 / NRRL 194 / M139) (Aspergillus nidulans)).